Reading from the N-terminus, the 633-residue chain is ABC transporter G family member 1 (633 aa).

The 243-residue stretch at 23 to 265 (LTWEDLWVTA…FALSGFPCPT (243 aa)) folds into the ABC transporter domain. Residue 60-67 (GPSGSGKS) coordinates ATP. The ABC transmembrane type-2 domain maps to 340–552 (TQSLVLTRRS…AYEGMFKNEF (213 aa)). Residue Asn-352 is glycosylated (N-linked (GlcNAc...) asparagine). The next 6 helical transmembrane spans lie at 364–384 (LAVYVVIAVGLGSLYYDVGFS), 394–414 (MLMFVASFITFMAIGGFPSFV), 440–460 (LSAMPYLLLVSLIPGAIAYFM), 470–490 (FIYFALVLFTCMMIVESLMMI), 498–518 (FLMGLIAGAGIQALMLLSGGF), and 580–600 (IDLVILLGMLVLYRVLFLLVV).

It belongs to the ABC transporter superfamily. ABCG family. In terms of assembly, homodimer. In terms of tissue distribution, restricted to the petals, with the highest expression in the limb and, to a lesser extent, in petal tubes, probably in both epidermal and mesophyll cell layers.

The protein resides in the cell membrane. ABC transporter controlling the release of volatile organic compounds (VOCs), including floral volatile benzenoids and phenylpropanoids (FVBP), in flowers of fragrant cultivars (e.g. cv. Mitchell and cv. V26). This scent, mostly produced in the evening and night by the petals, attracts the pollinators (e.g. the night-active hawkmoth pollinator Manduca sexta). The chain is ABC transporter G family member 1 from Petunia hybrida (Petunia).